The sequence spans 448 residues: Argininosuccinate synthase (448 aa).

ATP contacts are provided by residues 17–25 and A43; that span reads AFSGGLDTS. Y99 contacts L-citrulline. Residues G129 and T131 each coordinate ATP. Positions 131, 135, and 136 each coordinate L-aspartate. Position 135 (N135) interacts with L-citrulline. D136 contributes to the ATP binding site. 2 residues coordinate L-citrulline: R139 and S192. D194 lines the ATP pocket. The L-citrulline site is built by T201, E203, and E280.

It belongs to the argininosuccinate synthase family. Type 2 subfamily. In terms of assembly, homotetramer.

Its subcellular location is the cytoplasm. The catalysed reaction is L-citrulline + L-aspartate + ATP = 2-(N(omega)-L-arginino)succinate + AMP + diphosphate + H(+). It participates in amino-acid biosynthesis; L-arginine biosynthesis; L-arginine from L-ornithine and carbamoyl phosphate: step 2/3. This is Argininosuccinate synthase from Bradyrhizobium sp. (strain ORS 278).